The following is a 132-amino-acid chain: Protein NrdI (132 aa).

Belongs to the NrdI family.

Its function is as follows. Probably involved in ribonucleotide reductase function. The polypeptide is Protein NrdI (Bartonella quintana (strain Toulouse) (Rochalimaea quintana)).